We begin with the raw amino-acid sequence, 831 residues long: Probable glucan 1,3-beta-glucosidase D (831 aa).

Composition is skewed to basic and acidic residues over residues 1–24 (MPSH…YREV), 44–56 (RRDD…RSHE), 79–93 (RSHD…RSRA), 102–115 (SRRD…EYRR), 137–151 (RDGQ…DREA), and 198–213 (QRER…MESK). Disordered regions lie at residues 1–179 (MPSH…SGSH) and 192–241 (HYDE…GQSK). Topologically, residues 1-297 (MPSHSRSRDR…AQPPFWKRKK (297 aa)) are cytoplasmic. Residues 298 to 318 (WWIVIGVLVVVLAIVIPVAVV) traverse the membrane as a helical; Signal-anchor for type II membrane protein segment. The Extracellular portion of the chain corresponds to 319–831 (MSKKHGHDDD…PSFGDLPEYY (513 aa)). 7 N-linked (GlcNAc...) asparagine glycosylation sites follow: asparagine 376, asparagine 381, asparagine 393, asparagine 410, asparagine 442, asparagine 546, and asparagine 558. Glutamate 597 functions as the Proton donor in the catalytic mechanism. Asparagine 610, asparagine 636, asparagine 669, and asparagine 689 each carry an N-linked (GlcNAc...) asparagine glycan. Glutamate 702 functions as the Nucleophile in the catalytic mechanism.

It belongs to the glycosyl hydrolase 5 (cellulase A) family.

The protein resides in the cell membrane. The enzyme catalyses Successive hydrolysis of beta-D-glucose units from the non-reducing ends of (1-&gt;3)-beta-D-glucans, releasing alpha-glucose.. In terms of biological role, glucosidase involved in the degradation of cellulosic biomass. Active on lichenan. The polypeptide is Probable glucan 1,3-beta-glucosidase D (exgD) (Aspergillus oryzae (strain ATCC 42149 / RIB 40) (Yellow koji mold)).